The chain runs to 303 residues: Vesicle-trafficking protein SEC22c (303 aa).

Topologically, residues 1–183 (MSMILFASIV…EPAPNLRMKP (183 aa)) are cytoplasmic. Residues 8-119 (SIVRVRDGLP…YAFLEFDSVI (112 aa)) enclose the Longin domain. Residues 184–204 (VTALGVLSLVLNIMCAALNLI) traverse the membrane as a helical segment. The Lumenal portion of the chain corresponds to 205–223 (RGVHLAEHSLQVAQEEVGN). Residues 224 to 244 (ILAFFIPSVACIVQCYLYLFY) traverse the membrane as a helical segment. Over 245–248 (SPAR) the chain is Cytoplasmic. Residues 249–269 (TLKVLLMLASICLGNAYLHGL) form a helical membrane-spanning segment. A topological domain (lumenal) is located at residue Arg270. A helical membrane pass occupies residues 271-291 (NTWQILFHVGVAFLSSYQILT). Residues 292–303 (RQLQERQSDYGV) are Cytoplasmic-facing.

This sequence belongs to the synaptobrevin family.

It is found in the endoplasmic reticulum membrane. In terms of biological role, may be involved in vesicle transport between the ER and the Golgi complex. The chain is Vesicle-trafficking protein SEC22c (Sec22c) from Mus musculus (Mouse).